The primary structure comprises 197 residues: Imidazoleglycerol-phosphate dehydratase (197 aa).

The protein belongs to the imidazoleglycerol-phosphate dehydratase family.

The protein resides in the cytoplasm. It carries out the reaction D-erythro-1-(imidazol-4-yl)glycerol 3-phosphate = 3-(imidazol-4-yl)-2-oxopropyl phosphate + H2O. Its pathway is amino-acid biosynthesis; L-histidine biosynthesis; L-histidine from 5-phospho-alpha-D-ribose 1-diphosphate: step 6/9. This is Imidazoleglycerol-phosphate dehydratase from Chromobacterium violaceum (strain ATCC 12472 / DSM 30191 / JCM 1249 / CCUG 213 / NBRC 12614 / NCIMB 9131 / NCTC 9757 / MK).